A 392-amino-acid chain; its full sequence is 5-amino-6-(D-ribitylamino)uracil--L-tyrosine 4-hydroxyphenyl transferase (392 aa).

Positions 60-307 (VTYVVNRNIN…MAIARLYLGK (248 aa)) constitute a Radical SAM core domain. Residues Cys-74, Cys-78, and Cys-81 each contribute to the [4Fe-4S] cluster site.

Belongs to the radical SAM superfamily. CofH family. Consists of two subunits, CofG and CofH. Requires [4Fe-4S] cluster as cofactor.

It catalyses the reaction 5-amino-6-(D-ribitylamino)uracil + L-tyrosine + S-adenosyl-L-methionine = 5-amino-5-(4-hydroxybenzyl)-6-(D-ribitylimino)-5,6-dihydrouracil + 2-iminoacetate + 5'-deoxyadenosine + L-methionine + H(+). It functions in the pathway cofactor biosynthesis; coenzyme F0 biosynthesis. In terms of biological role, catalyzes the radical-mediated synthesis of 5-amino-5-(4-hydroxybenzyl)-6-(D-ribitylimino)-5,6-dihydrouracil from 5-amino-6-(D-ribitylamino)uracil and L-tyrosine. The chain is 5-amino-6-(D-ribitylamino)uracil--L-tyrosine 4-hydroxyphenyl transferase from Synechocystis sp. (strain ATCC 27184 / PCC 6803 / Kazusa).